Here is a 270-residue protein sequence, read N- to C-terminus: 4-hydroxy-tetrahydrodipicolinate reductase (270 aa).

NAD(+) contacts are provided by residues 8 to 13 (GALGRM), Asp-34, 102 to 104 (GTT), and 128 to 131 (SQNY). The active-site Proton donor/acceptor is the His-160. A (S)-2,3,4,5-tetrahydrodipicolinate-binding site is contributed by His-161. Catalysis depends on Lys-164, which acts as the Proton donor. 170–171 (GT) lines the (S)-2,3,4,5-tetrahydrodipicolinate pocket.

The protein belongs to the DapB family.

The protein resides in the cytoplasm. The enzyme catalyses (S)-2,3,4,5-tetrahydrodipicolinate + NAD(+) + H2O = (2S,4S)-4-hydroxy-2,3,4,5-tetrahydrodipicolinate + NADH + H(+). The catalysed reaction is (S)-2,3,4,5-tetrahydrodipicolinate + NADP(+) + H2O = (2S,4S)-4-hydroxy-2,3,4,5-tetrahydrodipicolinate + NADPH + H(+). It participates in amino-acid biosynthesis; L-lysine biosynthesis via DAP pathway; (S)-tetrahydrodipicolinate from L-aspartate: step 4/4. Its function is as follows. Catalyzes the conversion of 4-hydroxy-tetrahydrodipicolinate (HTPA) to tetrahydrodipicolinate. The chain is 4-hydroxy-tetrahydrodipicolinate reductase from Methanococcus maripaludis (strain DSM 14266 / JCM 13030 / NBRC 101832 / S2 / LL).